We begin with the raw amino-acid sequence, 936 residues long: Aconitate hydratase A (936 aa).

A disordered region spans residues 401 to 449 (VTPDFDAEGPATENTSAQTAGTPASAADAKGNIPSAAAGAEGRPSNPVT). The segment covering 412 to 422 (TENTSAQTAGT) has biased composition (polar residues). C472, C538, and C541 together coordinate [4Fe-4S] cluster.

Belongs to the aconitase/IPM isomerase family. In terms of assembly, monomer. [4Fe-4S] cluster is required as a cofactor.

The enzyme catalyses citrate = D-threo-isocitrate. The catalysed reaction is (2S,3R)-3-hydroxybutane-1,2,3-tricarboxylate = 2-methyl-cis-aconitate + H2O. It functions in the pathway carbohydrate metabolism; tricarboxylic acid cycle; isocitrate from oxaloacetate: step 2/2. Its pathway is organic acid metabolism; propanoate degradation. In terms of biological role, involved in the catabolism of short chain fatty acids (SCFA) via the tricarboxylic acid (TCA)(acetyl degradation route) and probably via the 2-methylcitrate cycle I (propionate degradation route). Catalyzes the reversible isomerization of citrate to isocitrate via cis-aconitate. Could catalyze the hydration of 2-methyl-cis-aconitate to yield (2R,3S)-2-methylisocitrate. The apo form of AcnA functions as a RNA-binding regulatory protein. This Corynebacterium jeikeium (strain K411) protein is Aconitate hydratase A (acn).